A 238-amino-acid polypeptide reads, in one-letter code: MEKGQMLYEGKAKKVYTTDQEGIYWVEYKDDATAFNGEKKGTIGDKGIVNNRLSALLFEVLEKTGIPTHFIELLNDREMLVRKLEMIPLEVVVRNIAAGSLAKRLGVAEGLKLSRPVVELYYKDDALGDPFVNESHSLAMGWAEERDLKEIQELGLKINGELQKILDQAGIILVDFKLEFGKAEGKVYLGDEISPDTCRFWDKETQEKLDKDRFRRDLGKVEEAYAEVYRRVKEVLKD.

The protein belongs to the SAICAR synthetase family.

The catalysed reaction is 5-amino-1-(5-phospho-D-ribosyl)imidazole-4-carboxylate + L-aspartate + ATP = (2S)-2-[5-amino-1-(5-phospho-beta-D-ribosyl)imidazole-4-carboxamido]succinate + ADP + phosphate + 2 H(+). It participates in purine metabolism; IMP biosynthesis via de novo pathway; 5-amino-1-(5-phospho-D-ribosyl)imidazole-4-carboxamide from 5-amino-1-(5-phospho-D-ribosyl)imidazole-4-carboxylate: step 1/2. In Desulfitobacterium hafniense (strain Y51), this protein is Phosphoribosylaminoimidazole-succinocarboxamide synthase.